The primary structure comprises 64 residues: Disintegrin VLO5A (64 aa).

Residues 1–64 (NSGNPCCDPV…SDCPRNPYKD (64 aa)) enclose the Disintegrin domain. Cystine bridges form between cysteine 6–cysteine 29, cysteine 20–cysteine 26, cysteine 25–cysteine 50, and cysteine 38–cysteine 57. Residues 42–44 (VGD) carry the Cell attachment site; atypical (VGD) motif.

The protein belongs to the venom metalloproteinase (M12B) family. P-II subfamily. P-IIe sub-subfamily. In terms of assembly, heterodimer with VLO5B; disulfide-linked. In terms of tissue distribution, expressed by the venom gland.

The protein localises to the secreted. Functionally, poor inhibitor of platelet aggregation. The disintegrin inhibits the adhesion of the alpha-4/beta-1 (ITGA4/ITGB1) integrin to VCAM-1. Inhibition on alpha-IIb/beta-3 (ITGA2B/ITGB3) is low. This is Disintegrin VLO5A from Macrovipera lebetina obtusa (Levant blunt-nosed viper).